The chain runs to 232 residues: 5'-methylthioadenosine/S-adenosylhomocysteine nucleosidase (232 aa).

The active-site Proton acceptor is E12. Substrate-binding positions include G78, I152, and M173–E174. D197 acts as the Proton donor in catalysis.

This sequence belongs to the PNP/UDP phosphorylase family. MtnN subfamily. As to quaternary structure, homodimer.

The catalysed reaction is S-adenosyl-L-homocysteine + H2O = S-(5-deoxy-D-ribos-5-yl)-L-homocysteine + adenine. The enzyme catalyses S-methyl-5'-thioadenosine + H2O = 5-(methylsulfanyl)-D-ribose + adenine. It catalyses the reaction 5'-deoxyadenosine + H2O = 5-deoxy-D-ribose + adenine. Its pathway is amino-acid biosynthesis; L-methionine biosynthesis via salvage pathway; S-methyl-5-thio-alpha-D-ribose 1-phosphate from S-methyl-5'-thioadenosine (hydrolase route): step 1/2. Its function is as follows. Catalyzes the irreversible cleavage of the glycosidic bond in both 5'-methylthioadenosine (MTA) and S-adenosylhomocysteine (SAH/AdoHcy) to adenine and the corresponding thioribose, 5'-methylthioribose and S-ribosylhomocysteine, respectively. Also cleaves 5'-deoxyadenosine, a toxic by-product of radical S-adenosylmethionine (SAM) enzymes, into 5-deoxyribose and adenine. Thus, is required for in vivo function of the radical SAM enzymes biotin synthase and lipoic acid synthase, that are inhibited by 5'-deoxyadenosine accumulation. This is 5'-methylthioadenosine/S-adenosylhomocysteine nucleosidase from Pectobacterium carotovorum subsp. carotovorum (strain PC1).